The primary structure comprises 148 residues: uncharacterized protein (148 aa).

Positions 38–99 are disordered; it reads QFRRHHHAEH…RRHLRKGHLK (62 aa). Residues 64 to 82 are compositionally biased toward basic and acidic residues; that stretch reads FHHDGGRHGHATRIHENNR. Over residues 83 to 99 the composition is skewed to basic residues; that stretch reads RPHKRNRRRHLRKGHLK.

This is an uncharacterized protein from Fowl adenovirus A serotype 1 (strain CELO / Phelps) (FAdV-1).